The chain runs to 72 residues: Translational regulator CsrA (72 aa).

Belongs to the CsrA/RsmA family. In terms of assembly, homodimer; the beta-strands of each monomer intercalate to form a hydrophobic core, while the alpha-helices form wings that extend away from the core.

It is found in the cytoplasm. Functionally, a translational regulator that binds mRNA to regulate translation initiation and/or mRNA stability. Usually binds in the 5'-UTR at or near the Shine-Dalgarno sequence preventing ribosome-binding, thus repressing translation. Its main target seems to be the major flagellin gene, while its function is anatagonized by FliW. The polypeptide is Translational regulator CsrA (Clostridium botulinum (strain Loch Maree / Type A3)).